Here is a 931-residue protein sequence, read N- to C-terminus: Protocadherin gamma-B2 (931 aa).

A signal peptide spans Met1 to Pro30. Cadherin domains lie at Val31 to Phe133, Lys134 to Phe242, Ser243 to Val347, Ile348 to Phe452, Gln453 to Val562, and Asp570 to Leu675. The Extracellular segment spans residues Val31–Tyr691. 2 N-linked (GlcNAc...) asparagine glycosylation sites follow: Asn419 and Asn545. The chain crosses the membrane as a helical span at residues Leu692–Ser712. Residues Leu713 to Lys931 are Cytoplasmic-facing. Disordered regions lie at residues Asp814–Asn840 and Ala901–Lys931. Over residues Trp815–Asn840 the composition is skewed to polar residues. Residues Asn921–Lys931 show a composition bias toward basic residues.

Its subcellular location is the cell membrane. Functionally, potential calcium-dependent cell-adhesion protein. May be involved in the establishment and maintenance of specific neuronal connections in the brain. This is Protocadherin gamma-B2 (PCDHGB2) from Pan troglodytes (Chimpanzee).